Consider the following 154-residue polypeptide: Low molecular weight protein-tyrosine-phosphatase PtpA (154 aa).

C8 serves as the catalytic Nucleophile. Residue R14 is part of the active site. The active-site Proton donor is D120.

This sequence belongs to the low molecular weight phosphotyrosine protein phosphatase family. Interacts with host CORO1A. Post-translationally, phosphorylations at Tyr-122 and Tyr-123 are essential for phosphatase activity.

Its subcellular location is the secreted. The enzyme catalyses O-phospho-L-tyrosyl-[protein] + H2O = L-tyrosyl-[protein] + phosphate. Secreted tyrosine phosphatase that plays a critical role during infection as a bacterial effector protein that counteracts host defenses. Required for intramacrophage survival. This chain is Low molecular weight protein-tyrosine-phosphatase PtpA (ptpA), found in Staphylococcus aureus (strain MSSA476).